A 297-amino-acid polypeptide reads, in one-letter code: HTH-type transcriptional regulator ArgP (297 aa).

Positions 2–58 constitute an HTH lysR-type domain; it reads FDYKLLSALAAVVEQAGFERAAQVLGLSQSAISQRIKLLEARVGQPVLVRGTPPSPT. A DNA-binding region (H-T-H motif) is located at residues 19–38; that stretch reads FERAAQVLGLSQSAISQRIK.

This sequence belongs to the LysR transcriptional regulatory family. Homodimer.

In terms of biological role, controls the transcription of genes involved in arginine and lysine metabolism. This Pseudomonas fluorescens (strain Pf0-1) protein is HTH-type transcriptional regulator ArgP.